We begin with the raw amino-acid sequence, 166 residues long: Ribosome biogenesis regulatory protein homolog (166 aa).

Residues Ser34 and Ser64 each carry the phosphoserine modification. The interval 144–166 is disordered; it reads KEKKLTSKQVRNTSKKIKRSRRH. The segment covering 156 to 166 has biased composition (basic residues); that stretch reads TSKKIKRSRRH.

This sequence belongs to the RRS1 family. Component of a hexameric 5S RNP precursor complex, composed of 5S RNA, rrs1, rpf2, rpl5a/rpl5b, rpl11a/rpl11b and syo1; this complex acts as a precursor for ribosome assembly. Interacts with sad1.

It localises to the nucleus. It is found in the nucleolus. Involved in ribosomal large subunit assembly. In Schizosaccharomyces pombe (strain 972 / ATCC 24843) (Fission yeast), this protein is Ribosome biogenesis regulatory protein homolog.